A 331-amino-acid polypeptide reads, in one-letter code: L-lactate dehydrogenase A chain (331 aa).

NAD(+) contacts are provided by residues 29 to 57 (GMVG…MEDK) and Arg-98. Substrate-binding residues include Arg-105, Asn-137, and Arg-168. Asn-137 is a binding site for NAD(+). The active-site Proton acceptor is His-192. Position 247 (Thr-247) interacts with substrate.

It belongs to the LDH/MDH superfamily. LDH family. In terms of assembly, homotetramer.

The protein resides in the cytoplasm. The catalysed reaction is (S)-lactate + NAD(+) = pyruvate + NADH + H(+). Its pathway is fermentation; pyruvate fermentation to lactate; (S)-lactate from pyruvate: step 1/1. Functionally, interconverts simultaneously and stereospecifically pyruvate and lactate with concomitant interconversion of NADH and NAD(+). The chain is L-lactate dehydrogenase A chain (ldha) from Parachaenichthys charcoti (Charcot's dragonfish).